We begin with the raw amino-acid sequence, 512 residues long: MVSKLDKYWQHPALYWPLLILFAAATPFTFAPYYHFWLMPLIFGAFVRLIELRPRFAVSSAYLFGLTAYTTQFYWIHTALHDVSGLPDLYAVPLTFLLPAYLALYPALCFWLWKKFTLPRGIKIGLVLPILWTLTEFARERFLTGFGWGAIGYSQITPDSPLAGFAPLGGIHMVTLATAFLGVWLVLASNNTARSGKRLLPIILIAALLAAGYTARQTDFTRPDGSRSTVALLQGNIDQTLKWREDQVIPTIQKYYEQVGKTTADIVILPETAIPVMRQNLPENILAKFAEQAQNNGSALAVGISQYTSDGNGYENAVINLTGYQENNQDGIPYYAKNHLVPFGEYKPLPFLTTPLYKMMDMPLSDFRKGGGKQSALLMKNQKIAFNICYEDGFGDELIAAAKDATLLANASNMAWYGKSNAMYQHLQQSQARAMELGRYMVRATNTGATAIISPKGNIIAQAQPDTETVLEGHIKGYVGETPYMKTGSSWWLMGILALAALILFIFRNKEH.

Transmembrane regions (helical) follow at residues 5 to 25 (LDKY…FAAA), 56 to 76 (FAVS…FYWI), 92 to 112 (VPLT…CFWL), 118 to 138 (LPRG…TEFA), 168 to 188 (LGGI…LVLA), and 195 to 215 (SGKR…GYTA). A CN hydrolase domain is found at 233 to 477 (LQGNIDQTLK…ETVLEGHIKG (245 aa)). Glutamate 271 serves as the catalytic Proton acceptor. Lysine 337 is a catalytic residue. The active-site Nucleophile is cysteine 389. Residues 487–507 (TGSSWWLMGILALAALILFIF) traverse the membrane as a helical segment.

This sequence belongs to the CN hydrolase family. Apolipoprotein N-acyltransferase subfamily.

Its subcellular location is the cell inner membrane. It carries out the reaction N-terminal S-1,2-diacyl-sn-glyceryl-L-cysteinyl-[lipoprotein] + a glycerophospholipid = N-acyl-S-1,2-diacyl-sn-glyceryl-L-cysteinyl-[lipoprotein] + a 2-acyl-sn-glycero-3-phospholipid + H(+). The protein operates within protein modification; lipoprotein biosynthesis (N-acyl transfer). Functionally, catalyzes the phospholipid dependent N-acylation of the N-terminal cysteine of apolipoprotein, the last step in lipoprotein maturation. This chain is Apolipoprotein N-acyltransferase, found in Neisseria meningitidis serogroup B (strain ATCC BAA-335 / MC58).